We begin with the raw amino-acid sequence, 530 residues long: Anthranilate synthase component 1, pyocyanine specific (530 aa).

331-332 (GT) lines the substrate pocket. E364 serves as a coordination point for Mg(2+). Substrate contacts are provided by residues Y452, R472, 486–488 (GAG), and G488. Residue E501 participates in Mg(2+) binding.

The protein belongs to the anthranilate synthase component I family. As to quaternary structure, heterotetramer consisting of two non-identical subunits: a beta subunit (PhnB) and a large alpha subunit (PhnA). Mg(2+) serves as cofactor.

The enzyme catalyses chorismate + L-glutamine = anthranilate + pyruvate + L-glutamate + H(+). Its pathway is secondary metabolite biosynthesis; pyocyanine biosynthesis. In terms of biological role, part of a heterotetrameric complex that catalyzes the two-step biosynthesis of anthranilate, a precursor for Pseudomonas quinolone signal (2-heptyl-3-hydroxy-4-quinolone; PQS) production which is required to induce the genes for the biosynthesis of the virulence factor pyocyanine (PCN), a characteristic blue-green phenazine pigment produced by P.aeruginosa. In the first step, the glutamine-binding beta subunit (PhnB) of anthranilate synthase (AS) provides the glutamine amidotransferase activity which generates ammonia as a substrate that, along with chorismate, is used in the second step, catalyzed by the large alpha subunit of AS (PhnA) to produce anthranilate. The chain is Anthranilate synthase component 1, pyocyanine specific from Pseudomonas aeruginosa (strain ATCC 15692 / DSM 22644 / CIP 104116 / JCM 14847 / LMG 12228 / 1C / PRS 101 / PAO1).